The primary structure comprises 312 residues: DNA-directed RNA polymerase subunit alpha (312 aa).

The segment at 1–229 is alpha N-terminal domain (alpha-NTD); sequence MLQYQIERID…ELFQPLATVT (229 aa). The segment at 240 to 312 is alpha C-terminal domain (alpha-CTD); the sequence is PSPEAQIPLE…ISIPQSRTSV (73 aa).

This sequence belongs to the RNA polymerase alpha chain family. In cyanobacteria the RNAP catalytic core is composed of 2 alpha, 1 beta, 1 beta', 1 gamma and 1 omega subunit. When a sigma factor is associated with the core the holoenzyme is formed, which can initiate transcription.

The enzyme catalyses RNA(n) + a ribonucleoside 5'-triphosphate = RNA(n+1) + diphosphate. DNA-dependent RNA polymerase catalyzes the transcription of DNA into RNA using the four ribonucleoside triphosphates as substrates. The chain is DNA-directed RNA polymerase subunit alpha from Prochlorococcus marinus (strain MIT 9301).